Consider the following 303-residue polypeptide: Probable 5-dehydro-4-deoxyglucarate dehydratase (303 aa).

It belongs to the DapA family.

It catalyses the reaction 5-dehydro-4-deoxy-D-glucarate + H(+) = 2,5-dioxopentanoate + CO2 + H2O. It participates in carbohydrate acid metabolism; D-glucarate degradation; 2,5-dioxopentanoate from D-glucarate: step 2/2. The sequence is that of Probable 5-dehydro-4-deoxyglucarate dehydratase from Pseudomonas syringae pv. syringae (strain B728a).